Consider the following 410-residue polypeptide: D-amino acid dehydrogenase (410 aa).

Position 9–14 (9–14 (GGGIVG)) interacts with FAD.

Belongs to the DadA oxidoreductase family. The cofactor is FAD.

The protein localises to the cell inner membrane. It carries out the reaction a D-alpha-amino acid + a quinone + H2O = a 2-oxocarboxylate + a quinol + NH4(+). Activity is markedly inhibited by benzoate, and moderately by SH reagents such as p-hydroxymercuribenzoate, iodoacetamide, and iodoacetate. Catalyzes the oxidative deamination of D-amino acids. Has broad substrate specificity; is mostly active on D-proline, and to a lesser extent, on several other D-amino acids such as D-alanine, D-phenylalanine and D-serine. Mediates electron transport from D-proline to coenzyme Q1 in vitro, and is involved in the electron transport chain from D-proline to the c-type cytochrome in vivo. The polypeptide is D-amino acid dehydrogenase (Helicobacter pylori (Campylobacter pylori)).